A 1204-amino-acid polypeptide reads, in one-letter code: Exportin-5 (1204 aa).

Residue A2 is modified to N-acetylalanine. Positions 2 to 108 are necessary for interaction with Ran; sequence AMDQVNALCE…ANGTLNILEE (107 aa). K396 bears the N6-acetyllysine mark. The interval 533 to 640 is necessary for interaction with ILF3; it reads ELLQMVLNFD…KQLLSNELLL (108 aa). The pre-miRNA binding stretch occupies residues 641–642; that stretch reads TQ. S826 carries the post-translational modification Phosphoserine.

The protein belongs to the exportin family. In terms of assembly, component of a nuclear export receptor complex composed of XPO5, RAN, dsRNA-binding proteins and dsRNA. Found in a nuclear export complex with XPO5, RAN, EEF1A1, and aminoacylated tRNA. Found in a nuclear export complex with XPO5, RAN, ILF3 and dsRNA. Found in a nuclear export complex with XPO5, RAN and pre-miRNA. Found in a nuclear export complex with XPO5, RAN, ILF3 and minihelix VA1 dsRNA. Found in a nuclear export complex with XPO5, RAN, ILF3, ZNF346 and dsRNA. Interacts with EEF1A1, ILF3, NUP153, NUP214 and ZNF346. Interacts with RAN and cargo proteins in a GTP-dependent manner. Interacts with isoform 5 of ADAR/ADAR1 (via DRBM domains). Interacts with SMAD4; mediates nuclear export of SMAD4. Interacts with RAN (GTP-bound form). In terms of tissue distribution, expressed in heart, brain, placenta, lung, skeletal muscle, kidney and pancreas.

The protein resides in the nucleus. The protein localises to the cytoplasm. In terms of biological role, mediates the nuclear export of proteins bearing a double-stranded RNA binding domain (dsRBD) and double-stranded RNAs (cargos). XPO5 in the nucleus binds cooperatively to the RNA and to the GTPase Ran in its active GTP-bound form. Proteins containing dsRBDs can associate with this trimeric complex through the RNA. Docking of this complex to the nuclear pore complex (NPC) is mediated through binding to nucleoporins. Upon transit of a nuclear export complex into the cytoplasm, hydrolysis of Ran-GTP to Ran-GDP (induced by RANBP1 and RANGAP1, respectively) cause disassembly of the complex and release of the cargo from the export receptor. XPO5 then returns to the nuclear compartment by diffusion through the nuclear pore complex, to mediate another round of transport. The directionality of nuclear export is thought to be conferred by an asymmetric distribution of the GTP- and GDP-bound forms of Ran between the cytoplasm and nucleus. Overexpression may in some circumstances enhance RNA-mediated gene silencing (RNAi). Mediates nuclear export of isoform 5 of ADAR/ADAR1 in a RanGTP-dependent manner. Mediates the nuclear export of micro-RNA precursors, which form short hairpins. Also mediates the nuclear export of synthetic short hairpin RNAs used for RNA interference. In some circumstances can also mediate the nuclear export of deacylated and aminoacylated tRNAs. Specifically recognizes dsRNAs that lack a 5'-overhang in a sequence-independent manner, have only a short 3'-overhang, and that have a double-stranded length of at least 15 base-pairs. Binding is dependent on Ran-GTP. Functionally, (Microbial infection) Mediates the nuclear export of adenovirus VA1 dsRNA. The sequence is that of Exportin-5 (XPO5) from Homo sapiens (Human).